The primary structure comprises 325 residues: ATP synthase gamma chain (325 aa).

It belongs to the ATPase gamma chain family. In terms of assembly, F-type ATPases have 2 components, CF(1) - the catalytic core - and CF(0) - the membrane proton channel. CF(1) has five subunits: alpha(3), beta(3), gamma(1), delta(1), epsilon(1). CF(0) has three main subunits: a, b and c.

The protein localises to the cell membrane. Functionally, produces ATP from ADP in the presence of a proton gradient across the membrane. The gamma chain is believed to be important in regulating ATPase activity and the flow of protons through the CF(0) complex. The polypeptide is ATP synthase gamma chain (Corynebacterium glutamicum (strain R)).